We begin with the raw amino-acid sequence, 498 residues long: ATP synthase subunit beta, chloroplastic (498 aa).

172–179 (GGAGVGKT) serves as a coordination point for ATP.

It belongs to the ATPase alpha/beta chains family. F-type ATPases have 2 components, CF(1) - the catalytic core - and CF(0) - the membrane proton channel. CF(1) has five subunits: alpha(3), beta(3), gamma(1), delta(1), epsilon(1). CF(0) has four main subunits: a(1), b(1), b'(1) and c(9-12).

It localises to the plastid. The protein localises to the chloroplast thylakoid membrane. It carries out the reaction ATP + H2O + 4 H(+)(in) = ADP + phosphate + 5 H(+)(out). Functionally, produces ATP from ADP in the presence of a proton gradient across the membrane. The catalytic sites are hosted primarily by the beta subunits. This Populus alba (White poplar) protein is ATP synthase subunit beta, chloroplastic.